A 65-amino-acid polypeptide reads, in one-letter code: MRCLPVFIILLLLASTAAVDVAGSKLKRRLERKPYQGSQAYVKKTAFGLRLCCKRHHGCHPCGRT.

Residues 1 to 18 form the signal peptide; the sequence is MRCLPVFIILLLLASTAA. Residues 19–49 constitute a propeptide that is removed on maturation; the sequence is VDVAGSKLKRRLERKPYQGSQAYVKKTAFGL. Cystine bridges form between Cys52/Cys62 and Cys53/Cys59. At Pro61 the chain carries 4-hydroxyproline.

This sequence belongs to the conotoxin T superfamily. As to expression, expressed by the venom duct.

The protein localises to the secreted. Probable neurotoxin with unknown target. Possibly targets ion channels. The protein is Conotoxin Cal1.5 of Californiconus californicus (California cone).